The primary structure comprises 173 residues: uncharacterized protein (173 aa).

One can recognise an N-acetyltransferase domain in the interval 2-171; it reads VTVREAKLED…PDLSALKTLL (170 aa).

Belongs to the acetyltransferase family.

This is an uncharacterized protein from Bacillus subtilis (strain 168).